We begin with the raw amino-acid sequence, 235 residues long: Elongation factor Tu, chloroplastic (235 aa).

Residues 1-125 (KNMITGAAQM…AVDSYIPTPE (125 aa)) form the tr-type G domain. 47–50 (NKED) is a binding site for GTP.

Belongs to the TRAFAC class translation factor GTPase superfamily. Classic translation factor GTPase family. EF-Tu/EF-1A subfamily.

The protein localises to the plastid. It is found in the chloroplast. It carries out the reaction GTP + H2O = GDP + phosphate + H(+). Functionally, GTP hydrolase that promotes the GTP-dependent binding of aminoacyl-tRNA to the A-site of ribosomes during protein biosynthesis. The sequence is that of Elongation factor Tu, chloroplastic (tufA) from Mantoniella squamata (Unicellular alga).